Here is a 245-residue protein sequence, read N- to C-terminus: Lactate utilization protein A (245 aa).

It belongs to the LutA/YkgE family.

Is involved in L-lactate degradation and allows cells to grow with lactate as the sole carbon source. This is Lactate utilization protein A from Macrococcus caseolyticus (strain JCSC5402) (Macrococcoides caseolyticum).